The primary structure comprises 754 residues: Deadenylation-dependent mRNA-decapping factor pdc2 (754 aa).

The interaction with lsm1 stretch occupies residues 499–754 (LESIWKALYI…MGLDARQLSA (256 aa)).

It belongs to the PAT1 family. Interacts with dcp2. Interacts with lsm1; via C-terminus.

It localises to the cytoplasm. The protein resides in the nucleus. The protein localises to the P-body. Functionally, activator of decapping that functions as a general and active mechanism of translational repression and required for P-body formation. Stabilizes the 3' terminus of mRNAs and modulates the rates of mRNA-decapping that occur following deadenylation. Might be required for promoting the formation or the stabilization of the preinitiation translation complexes. Necessary for accurate chromosome transmission during cell division. Together with lsm1, recruits the deadenylase ccr4 to P-bodies. The sequence is that of Deadenylation-dependent mRNA-decapping factor pdc2 from Schizosaccharomyces pombe (strain 972 / ATCC 24843) (Fission yeast).